The primary structure comprises 562 residues: Protein wntless (562 aa).

Over 1–15 (MSGTILENLSGRKLS) the chain is Cytoplasmic. The helical transmembrane segment at 16-36 (ILVSSLMLCQVVCFLMGGLFA) threads the bilayer. Residues 37–239 (PVPAGHQTVL…AIHQNGGFTQ (203 aa)) are Lumenal-facing. Asparagine 58 and asparagine 103 each carry an N-linked (GlcNAc...) asparagine glycan. Residues 240–260 (VWLVLKTLLFPFVIGIMMWFW) form a helical membrane-spanning segment. Topologically, residues 261–275 (RRVHILQRSPALLEY) are cytoplasmic. The chain crosses the membrane as a helical span at residues 276–296 (MLFYLGGALSFLNLPLELLTL). Residues 297 to 311 (GVEMPYMLLLSDVRQ) lie on the Lumenal side of the membrane. A helical transmembrane segment spans residues 312–332 (GIFYAMLLSFWLVFAGEHMLI). Residues 333–344 (QDSPSKSTIRSR) are Cytoplasmic-facing. Residues 345 to 365 (YWKHLSAVVVGCISLFVFDIC) traverse the membrane as a helical segment. Topologically, residues 366–390 (ERGVQMRNPFYSIWTTPLGAKVAMS) are lumenal. A helical transmembrane segment spans residues 391–411 (FIVLAGVSAAIYFLFLCFMVW). The Cytoplasmic segment spans residues 412–441 (KVFKDIGDKRTSLPSMSQARRLHYEGLIYR). Residues 442-462 (FKFLMLATLLCAGLTVAGFIM) traverse the membrane as a helical segment. The Lumenal segment spans residues 463–482 (GQMAEGHWKWNENIEIQLTS). A helical membrane pass occupies residues 483–503 (AFLTGVYGMWNIYIFALIILY). The Cytoplasmic segment spans residues 504-562 (APSHKQWPTMRHSDETTQSNENIVASAASEEIEFSNLPSDSNPSEISSLTSFTRKVAFD).

This sequence belongs to the wntless family. Interacts with wg; in the Golgi. Interacts with Vps35, a component of the retromer complex; wls stability is regulated by Vps35.

The protein localises to the presynaptic cell membrane. The protein resides in the postsynaptic cell membrane. It localises to the cell membrane. It is found in the endoplasmic reticulum membrane. Its subcellular location is the endosome membrane. The protein localises to the golgi apparatus membrane. A segment polarity gene required for wingless (wg)-dependent patterning processes, acting in both wg-sending cells and wg-target cells. In non-neuronal cells wls directs wg secretion. The wls traffic loop encompasses the Golgi, the cell surface, an endocytic compartment and a retrograde route leading back to the Golgi, and involves clathrin-mediated endocytosis and the retromer complex (a conserved protein complex consisting of Vps35 and Vps26). In neuronal cells (the larval motorneuron NMJ), the wg signal moves across the synapse via the release of wls-containing exosome-like vesicles. Postsynaptic wls is required for the trafficking of fz2 through the fz2-interacting protein Grip. The polypeptide is Protein wntless (Drosophila grimshawi (Hawaiian fruit fly)).